The following is an 873-amino-acid chain: Cyanophycin synthetase (873 aa).

The 257-residue stretch at 224–480 (KTILQDAGIP…VAAPVLDMLF (257 aa)) folds into the ATP-grasp domain. Position 495-501 (495-501 (GTNGKTT)) interacts with ATP.

In the C-terminal section; belongs to the MurCDEF family. Homodimer.

The enzyme catalyses [L-4-(L-arginin-2-N-yl)aspartate](n) + L-aspartate + ATP = [L-4-(L-arginin-2-N-yl)aspartate](n)-L-aspartate + ADP + phosphate + H(+). It catalyses the reaction [L-4-(L-arginin-2-N-yl)aspartate](n)-L-aspartate + L-arginine + ATP = [L-4-(L-arginin-2-N-yl)aspartate](n+1) + ADP + phosphate + H(+). Catalyzes the ATP-dependent polymerization of arginine and aspartate to multi-L-arginyl-poly-L-aspartic acid (cyanophycin; a water-insoluble reserve polymer). The polypeptide is Cyanophycin synthetase (cphA) (Synechocystis sp. (strain ATCC 27184 / PCC 6803 / Kazusa)).